Here is a 150-residue protein sequence, read N- to C-terminus: Large ribosomal subunit protein bL9 (150 aa).

Belongs to the bacterial ribosomal protein bL9 family.

Binds to the 23S rRNA. The protein is Large ribosomal subunit protein bL9 of Verminephrobacter eiseniae (strain EF01-2).